The following is a 173-amino-acid chain: DRBM domain-containing protein 340R (173 aa).

A DRBM domain is found at 30 to 102 (NSIGFLNEFC…AFKTIKELNL (73 aa)).

The sequence is that of DRBM domain-containing protein 340R from Invertebrate iridescent virus 6 (IIV-6).